The primary structure comprises 674 residues: Methionine--tRNA ligase (674 aa).

Residues 11-21 carry the 'HIGH' region motif; the sequence is PYANGDLHLGH. Zn(2+)-binding residues include C142, C145, C155, and C158. A 'KMSKS' region motif is present at residues 330 to 334; it reads KMSKS. K333 contacts ATP. The 101-residue stretch at 574–674 folds into the tRNA-binding domain; that stretch reads DFMKVDLRIA…EGAQPGMRVK (101 aa).

It belongs to the class-I aminoacyl-tRNA synthetase family. MetG type 1 subfamily. Homodimer. Requires Zn(2+) as cofactor.

The protein resides in the cytoplasm. The enzyme catalyses tRNA(Met) + L-methionine + ATP = L-methionyl-tRNA(Met) + AMP + diphosphate. Functionally, is required not only for elongation of protein synthesis but also for the initiation of all mRNA translation through initiator tRNA(fMet) aminoacylation. The chain is Methionine--tRNA ligase from Francisella tularensis subsp. holarctica (strain OSU18).